A 127-amino-acid chain; its full sequence is Cytochrome b-c1 complex subunit 7, mitochondrial (127 aa).

The protein belongs to the UQCRB/QCR7 family. In terms of assembly, component of the ubiquinol-cytochrome c oxidoreductase (cytochrome b-c1 complex, complex III, CIII), a multisubunit enzyme composed of 10 subunits. The complex is composed of 3 respiratory subunits cytochrome b (COB), cytochrome c1 (CYT1) and Rieske protein (RIP1), 2 core protein subunits COR1 and QCR2, and 5 low-molecular weight protein subunits QCR6, QCR7, QCR8, QCR9 and QCR10. The complex exists as an obligatory dimer and forms supercomplexes (SCs) in the inner mitochondrial membrane with a monomer or a dimer of cytochrome c oxidase (complex IV, CIV), resulting in 2 different assemblies (supercomplexes III(2)IV and III(2)IV(2)).

It localises to the mitochondrion inner membrane. In terms of biological role, component of the ubiquinol-cytochrome c oxidoreductase, a multisubunit transmembrane complex that is part of the mitochondrial electron transport chain which drives oxidative phosphorylation. Plays an important role in the uptake of multiple carbon sources such acetate, lactate, amino acids or GlcNAc present in different host niches. The polypeptide is Cytochrome b-c1 complex subunit 7, mitochondrial (Candida albicans (strain SC5314 / ATCC MYA-2876) (Yeast)).